Reading from the N-terminus, the 377-residue chain is Succinyl-diaminopimelate desuccinylase (377 aa).

His-66 lines the Zn(2+) pocket. Asp-68 is a catalytic residue. Asp-99 contacts Zn(2+). Catalysis depends on Glu-133, which acts as the Proton acceptor. Zn(2+)-binding residues include Glu-134, Glu-162, and His-348.

Belongs to the peptidase M20A family. DapE subfamily. As to quaternary structure, homodimer. Requires Zn(2+) as cofactor. It depends on Co(2+) as a cofactor.

The enzyme catalyses N-succinyl-(2S,6S)-2,6-diaminopimelate + H2O = (2S,6S)-2,6-diaminopimelate + succinate. Its pathway is amino-acid biosynthesis; L-lysine biosynthesis via DAP pathway; LL-2,6-diaminopimelate from (S)-tetrahydrodipicolinate (succinylase route): step 3/3. Its function is as follows. Catalyzes the hydrolysis of N-succinyl-L,L-diaminopimelic acid (SDAP), forming succinate and LL-2,6-diaminopimelate (DAP), an intermediate involved in the bacterial biosynthesis of lysine and meso-diaminopimelic acid, an essential component of bacterial cell walls. This chain is Succinyl-diaminopimelate desuccinylase, found in Methylococcus capsulatus (strain ATCC 33009 / NCIMB 11132 / Bath).